The sequence spans 239 residues: Fatty acid metabolism regulator protein (239 aa).

The HTH gntR-type domain maps to 6 to 74; the sequence is KGPASFAEKY…HGKPTRVNNF (69 aa). Residues 34-53 constitute a DNA-binding region (H-T-H motif); it reads ERELSELIGVTRTTLREVLQ.

As to quaternary structure, homodimer.

Its subcellular location is the cytoplasm. Its function is as follows. Multifunctional regulator of fatty acid metabolism. The polypeptide is Fatty acid metabolism regulator protein (Shewanella halifaxensis (strain HAW-EB4)).